A 112-amino-acid polypeptide reads, in one-letter code: Putative pterin-4-alpha-carbinolamine dehydratase (112 aa).

It belongs to the pterin-4-alpha-carbinolamine dehydratase family.

It catalyses the reaction (4aS,6R)-4a-hydroxy-L-erythro-5,6,7,8-tetrahydrobiopterin = (6R)-L-erythro-6,7-dihydrobiopterin + H2O. In Shewanella piezotolerans (strain WP3 / JCM 13877), this protein is Putative pterin-4-alpha-carbinolamine dehydratase.